Reading from the N-terminus, the 624-residue chain is Vitamin B12 transporter BtuB (624 aa).

An N-terminal signal peptide occupies residues 1–21; the sequence is MTIKKYTLLTALSVTAFSGWA. Residues 31-38 carry the TonB box motif; the sequence is NEMVVTAN. Positions 43–157 constitute a TBDR plug domain; the sequence is PKSSVLAPVD…IGGVVNIITE (115 aa). Residues L88, S90, N97, and 115–116 each bind cyanocob(III)alamin; that span reads IS. One can recognise a TBDR beta-barrel domain in the interval 160-624; it reads TLGSTLTAGL…EYYFTGSYNF (465 aa). 3 beta stranded membrane passes run 163 to 170, 174 to 183, and 189 to 200; these read STLTAGLG, YQNYNGSTQQ, and TTITLAGNYDYS. 4 residues coordinate Ca(2+): D204, Q216, D218, and D220. 2 beta stranded membrane passes run 222–232 and 237–253; these read YLGKMLWLGAN and EQFS…NRSD. Positions 254, 255, and 266 each coordinate Ca(2+). 17 beta stranded membrane passes run 268 to 282, 284 to 301, 314 to 330, 333 to 342, 358 to 374, 376 to 386, 390 to 405, 408 to 422, 440 to 449, 455 to 464, 481 to 498, 502 to 517, 525 to 537, 543 to 557, 568 to 582, 595 to 606, and 612 to 624; these read RSLS…INFS, GGYA…QDYN, TLDD…NTYQ, LGNVGGGLDW, YEQR…QFVG, VTLEGAIRGDD, FGWH…WEFV, YRLI…KAPN, ESTQWEAAIT, LDWRLSAYRN, YYNV…TGSF, PLSH…PRNA, RRAK…QLDW, DWSV…RYDS, PVKL…LAVS, IANLFDKDYEMV, and PGRE…SYNF. T314 is a binding site for cyanocob(III)alamin. Position 525 (R525) interacts with cyanocob(III)alamin. The TonB C-terminal box motif lies at 607-624; sequence YGYQTPGREYYFTGSYNF.

It belongs to the TonB-dependent receptor family. BtuB (TC 1.B.14.3.1) subfamily.

The protein resides in the cell outer membrane. Functionally, involved in the active translocation of vitamin B12 (cyanocobalamin) across the outer membrane to the periplasmic space. It derives its energy for transport by interacting with the trans-periplasmic membrane protein TonB. This chain is Vitamin B12 transporter BtuB, found in Yersinia pseudotuberculosis serotype O:1b (strain IP 31758).